Reading from the N-terminus, the 709-residue chain is MSRVLHPIFLFGKTSFLYSGCSKFGGRLFNNSIVHGWLRTRSYALASGLHPLRKQKLAHFEDLANANMSDPYMQAKLYKELADNFPEAIISRYETQGVARNSACDRYYQEALRKKSWSRSLSNNISLSQSSSSPATSSFSDPKAFSAGVPKFTSDTSSTVSSTPSLNHSLQNSMPPSTPTPPPVWAPTIVSSALGTSSKTPVYVVVDEPRFTKFFRIFKFIAGLSVASYFVLLGMSIFAETSGLNNIMTNTTEQEPMEERAINVRFSDVQGVDEAKEELEEIVDFLRDPTHFTRLGGKLPRGVLLTGPPGTGKTMLARAVAGEANVPFFFMSGSQFDEMYVGVGAKRVRELFAAARKQAPSIIFIDELDAIGQKRNARDAAHMRQTLNQLLVDLDGFSKNEDLAHPVVFIGATNFPESLDPALTRPGRFDRHIHVPLPDVRGRLAILLQHTRHVPLGKDVDLSIIARGTSGFAGADLANLINQAAVYASKNLSTAVSMRDLEWSKDRILMGAERKSAFITPENKLMTAYHEGGHALVALFTKNAMRPYKATIMPRGSSLGMTISLPDMDKDSWTREEYLAMLDVTMGGRAAEELLYGKDKITSGAHNDIDKATQVARRMVTEFGMSDRIGPVSLEAEMDNLSPATRALVESEIKSLLEASYERSLSLLKSHKKELDALATALVDYEFLTAEEMNRVVKGDRDLLRNKLS.

Residues 152–182 (FTSDTSSTVSSTPSLNHSLQNSMPPSTPTPP) form a disordered region. Low complexity predominate over residues 153 to 165 (TSDTSSTVSSTPS). The helical transmembrane segment at 217–239 (IFKFIAGLSVASYFVLLGMSIFA) threads the bilayer. 307-314 (GPPGTGKT) is an ATP binding site. His-530 contributes to the Zn(2+) binding site. Glu-531 is a catalytic residue. Residues His-534 and Asp-608 each contribute to the Zn(2+) site.

This sequence in the N-terminal section; belongs to the AAA ATPase family. In the C-terminal section; belongs to the peptidase M41 family. Requires Zn(2+) as cofactor.

It is found in the mitochondrion membrane. Functionally, putative ATP-dependent protease. This is ATP-dependent zinc metalloprotease YME1 homolog from Schizosaccharomyces pombe (strain 972 / ATCC 24843) (Fission yeast).